A 521-amino-acid polypeptide reads, in one-letter code: GMP synthase [glutamine-hydrolyzing] (521 aa).

Residues 8-203 (KILILDFGAQ…VVDVCGCQTL (196 aa)) form the Glutamine amidotransferase type-1 domain. Residue C85 is the Nucleophile of the active site. Residues H177 and E179 contribute to the active site. The GMPS ATP-PPase domain occupies 204 to 396 (WTAANIIDDQ…LGLPRTMVYR (193 aa)). 231–237 (SGGVDSS) provides a ligand contact to ATP.

As to quaternary structure, homodimer.

It catalyses the reaction XMP + L-glutamine + ATP + H2O = GMP + L-glutamate + AMP + diphosphate + 2 H(+). Its pathway is purine metabolism; GMP biosynthesis; GMP from XMP (L-Gln route): step 1/1. Catalyzes the synthesis of GMP from XMP. This is GMP synthase [glutamine-hydrolyzing] from Xanthomonas campestris pv. campestris (strain B100).